We begin with the raw amino-acid sequence, 653 residues long: Endoglin (653 aa).

Positions 1 to 26 are cleaved as a signal peptide; the sequence is MDRGVLPLPITLLFVIYSFVPTTGLA. The interval 27-47 is OR1, N-terminal part; the sequence is ERVGCDLQPVDPTRGEVTFTT. Residues 27–337 are required for interaction with GDF2; sequence ERVGCDLQPV…SSCGGVFQTT (311 aa). Topologically, residues 27 to 581 are extracellular; the sequence is ERVGCDLQPV…IVSPDLSGKG (555 aa). Disulfide bonds link Cys-31/Cys-209, Cys-54/Cys-184, Cys-244/Cys-330, Cys-350/Cys-382, Cys-363/Cys-442, Cys-394/Cys-412, and Cys-493/Cys-549. Residues 48-201 are OR2; sequence SQVSEGCVAQ…MGATLEWQPR (154 aa). N-linked (GlcNAc...) asparagine glycosylation is found at Asn-89, Asn-135, and Asn-266. The interval 202 to 330 is OR1, C-terminal part; sequence AQTPVQSCRL…SNVSLRASSC (129 aa). The essential for interaction with GDF2 stretch occupies residues 270–282; sequence QILTTGEYSVKIF. N-linked (GlcNAc...) asparagine glycans are attached at residues Asn-307 and Asn-322. Residues 363 to 510 enclose the ZP domain; sequence CGNQVMTLAL…GDMVELIQSR (148 aa). The helical transmembrane segment at 582–606 threads the bilayer; that stretch reads LVLPSVLGITFGAFLIGALLTAALW. Topologically, residues 607 to 653 are cytoplasmic; sequence YIYSHTRGPSKREPVVAVAAPASSESSSTNHSIGSTQSTPCSTSSMA. The span at 624–634 shows a compositional bias: low complexity; that stretch reads VAAPASSESSS. Residues 624 to 653 form a disordered region; the sequence is VAAPASSESSSTNHSIGSTQSTPCSTSSMA. Positions 635–653 are enriched in polar residues; the sequence is TNHSIGSTQSTPCSTSSMA. Residues Ser-641 and Ser-644 each carry the phosphoserine; by TGFBR1 modification.

As to quaternary structure, homodimer; disulfide-linked. Forms a heteromeric complex with the signaling receptors for transforming growth factor-beta: TGFBR1 and/or TGFBR2. Interacts with TGFB1. It is able to bind TGFB1 and TGFB2 with high affinity, but not TGFB3. Interacts with GDF2, forming a heterotetramer with a 2:2 stoichiometry. Interacts with ACVRL1. Can form a heteromeric complex with GDF2 and ACVRL1. Interacts with BMP10. Interacts with DYNLT4. Interacts with ARRB2. As to expression, detected on blood vessels (at protein level). Detected on adult pulmonary artery, capillaries supporting the heart muscle and lung alveolar capillary endothelial cells. Endoglin is restricted to endothelial cells in all tissues except bone marrow and is also found in stromal cells within the connective tissue of intestine, stomach, heart, skeletal muscle, uterus, ovary, oviduct, testis and thymus.

Its subcellular location is the cell membrane. In terms of biological role, vascular endothelium glycoprotein that plays an important role in the regulation of angiogenesis. Required for normal structure and integrity of adult vasculature. Regulates the migration of vascular endothelial cells. Required for normal extraembryonic angiogenesis and for embryonic heart development. May regulate endothelial cell shape changes in response to blood flow, which drive vascular remodeling and establishment of normal vascular morphology during angiogenesis. May play a role in the binding of endothelial cells to integrins. Acts as a TGF-beta coreceptor and is involved in the TGF-beta/BMP signaling cascade that ultimately leads to the activation of SMAD transcription factors. Required for GDF2/BMP9 signaling through SMAD1 in endothelial cells and modulates TGFB1 signaling through SMAD3. The sequence is that of Endoglin (Eng) from Mus musculus (Mouse).